The sequence spans 84 residues: Neurotoxin BmK-M11 (84 aa).

The N-terminal stretch at 1 to 19 (MNYLVMISFALLLMTGVES) is a signal peptide. The LCN-type CS-alpha/beta domain maps to 21–83 (RDAYIAKPEN…VPIRVPGKCH (63 aa)). 4 disulfide bridges follow: Cys-31/Cys-82, Cys-35/Cys-55, Cys-41/Cys-65, and Cys-45/Cys-67. A propeptide (removed by a carboxypeptidase) is located at residue Arg-84.

It belongs to the long (4 C-C) scorpion toxin superfamily. Sodium channel inhibitor family. Alpha subfamily. As to expression, expressed by the venom gland.

Its subcellular location is the secreted. Its function is as follows. Alpha toxins bind voltage-independently at site-3 of sodium channels (Nav) and inhibit the inactivation of the activated channels, thereby blocking neuronal transmission. This recombinant toxin selectively inhibits the fast inactivation of mNav1.4/SCN4A (EC(50)=82.3 nM) (tested in HEK293 cells). The chain is Neurotoxin BmK-M11 from Olivierus martensii (Manchurian scorpion).